We begin with the raw amino-acid sequence, 402 residues long: B box and SPRY domain-containing protein (402 aa).

The interval 1 to 20 is disordered; the sequence is MSAEGAEPGPGSGSGPGPGP. The B box-type zinc-finger motif lies at 17–65; it reads GPGPLCPEHGQALSWFCGSERRPVCAACAGLGGRCRGHRIRRAEERAEE. In terms of domain architecture, B30.2/SPRY spans 212 to 402; that stretch reads PLLTQLWATA…VADQTISIVR (191 aa).

In terms of assembly, interacts with TRPV5 and TRPV6. Interacts with YWHAZ/14-3-3 protein zeta.

It is found in the cytoplasm. Its subcellular location is the membrane. Functionally, may regulate epithelial calcium transport by inhibiting TRPV5 activity. This chain is B box and SPRY domain-containing protein (BSPRY), found in Homo sapiens (Human).